Consider the following 226-residue polypeptide: Enolase-phosphatase E1 (226 aa).

It belongs to the HAD-like hydrolase superfamily. MasA/MtnC family. Monomer. Requires Mg(2+) as cofactor.

The enzyme catalyses 5-methylsulfanyl-2,3-dioxopentyl phosphate + H2O = 1,2-dihydroxy-5-(methylsulfanyl)pent-1-en-3-one + phosphate. Its pathway is amino-acid biosynthesis; L-methionine biosynthesis via salvage pathway; L-methionine from S-methyl-5-thio-alpha-D-ribose 1-phosphate: step 3/6. It participates in amino-acid biosynthesis; L-methionine biosynthesis via salvage pathway; L-methionine from S-methyl-5-thio-alpha-D-ribose 1-phosphate: step 4/6. Bifunctional enzyme that catalyzes the enolization of 2,3-diketo-5-methylthiopentyl-1-phosphate (DK-MTP-1-P) into the intermediate 2-hydroxy-3-keto-5-methylthiopentenyl-1-phosphate (HK-MTPenyl-1-P), which is then dephosphorylated to form the acireductone 1,2-dihydroxy-3-keto-5-methylthiopentene (DHK-MTPene). This chain is Enolase-phosphatase E1, found in Shewanella sp. (strain MR-4).